A 795-amino-acid polypeptide reads, in one-letter code: Myosin light chain kinase 3 (795 aa).

Residue Ser-155 is modified to Phosphoserine. Disordered stretches follow at residues 236–257 and 305–328; these read GPGQ…ASEN and SSGP…GDAL. 2 positions are modified to phosphoserine: Ser-351 and Ser-432. Residues 367 to 452 are disordered; that stretch reads DQIPKGARPF…GPGRTEAGRL (86 aa). Residues 491–746 form the Protein kinase domain; it reads VSQHEVLGGG…ATQCLKHEWL (256 aa). Residues 497 to 505 and Lys-520 contribute to the ATP site; that span reads LGGGRFGQV. The active-site Proton acceptor is Asp-612.

It belongs to the protein kinase superfamily. CAMK Ser/Thr protein kinase family. Mg(2+) serves as cofactor. In terms of processing, phosphorylated on serine residues. In terms of tissue distribution, restricted to cardiomyocytes (at protein level). Down-regulated in heart after experimental myocardial infarction at the protein level; no significant changes at the mRNA level.

The protein resides in the cytoplasm. The catalysed reaction is L-seryl-[myosin light chain] + ATP = O-phospho-L-seryl-[myosin light chain] + ADP + H(+). The enzyme catalyses L-threonyl-[myosin light chain] + ATP = O-phospho-L-threonyl-[myosin light chain] + ADP + H(+). Kinase that phosphorylates MYL2 in vitro. Has been proposed to be calmodulin-dependent, although MYL2 phosphorylation has also been observed in the presence or absence of calmodulin. Promotes sarcomere formation in cardiomyocytes and increases cardiomyocyte contractility. The sequence is that of Myosin light chain kinase 3 (Mylk3) from Mus musculus (Mouse).